Reading from the N-terminus, the 152-residue chain is Protein-export protein SecB (152 aa).

This sequence belongs to the SecB family. In terms of assembly, homotetramer, a dimer of dimers. One homotetramer interacts with 1 SecA dimer.

The protein localises to the cytoplasm. Its function is as follows. One of the proteins required for the normal export of preproteins out of the cell cytoplasm. It is a molecular chaperone that binds to a subset of precursor proteins, maintaining them in a translocation-competent state. It also specifically binds to its receptor SecA. The polypeptide is Protein-export protein SecB (Rickettsia felis (strain ATCC VR-1525 / URRWXCal2) (Rickettsia azadi)).